A 914-amino-acid polypeptide reads, in one-letter code: Alanine--tRNA ligase (914 aa).

Positions 613, 617, 717, and 721 each coordinate Zn(2+).

It belongs to the class-II aminoacyl-tRNA synthetase family. Zn(2+) is required as a cofactor.

The protein localises to the cytoplasm. The catalysed reaction is tRNA(Ala) + L-alanine + ATP = L-alanyl-tRNA(Ala) + AMP + diphosphate. Its function is as follows. Catalyzes the attachment of alanine to tRNA(Ala) in a two-step reaction: alanine is first activated by ATP to form Ala-AMP and then transferred to the acceptor end of tRNA(Ala). Also edits incorrectly charged Ser-tRNA(Ala) and Gly-tRNA(Ala) via its editing domain. The protein is Alanine--tRNA ligase of Pyrococcus abyssi (strain GE5 / Orsay).